The sequence spans 375 residues: Histidine biosynthesis bifunctional protein HisB (375 aa).

The tract at residues 1–168 (MTPIVFIDRD…GIAHTLADAP (168 aa)) is histidinol-phosphatase. Asp8 acts as the Nucleophile in catalysis. Residues Asp8, Asp10, and Asp128 each coordinate Mg(2+). The Proton donor role is filled by Asp10. The imidazoleglycerol-phosphate dehydratase stretch occupies residues 169 to 375 (RRAVVQRHTK…HVLPSTKGAL (207 aa)).

The protein in the N-terminal section; belongs to the histidinol-phosphatase family. It in the C-terminal section; belongs to the imidazoleglycerol-phosphate dehydratase family. Mg(2+) serves as cofactor.

It is found in the cytoplasm. It catalyses the reaction D-erythro-1-(imidazol-4-yl)glycerol 3-phosphate = 3-(imidazol-4-yl)-2-oxopropyl phosphate + H2O. The catalysed reaction is L-histidinol phosphate + H2O = L-histidinol + phosphate. It participates in amino-acid biosynthesis; L-histidine biosynthesis; L-histidine from 5-phospho-alpha-D-ribose 1-diphosphate: step 6/9. Its pathway is amino-acid biosynthesis; L-histidine biosynthesis; L-histidine from 5-phospho-alpha-D-ribose 1-diphosphate: step 8/9. The sequence is that of Histidine biosynthesis bifunctional protein HisB from Xylella fastidiosa (strain 9a5c).